Reading from the N-terminus, the 418-residue chain is Voltage-gated ClC-type chloride channel ClcB (418 aa).

10 helical membrane-spanning segments follow: residues 5–25 (LLIATVVGILAAFAVAGFRHA), 54–74 (LLTPALGGLAAGLLLMGWQKF), 146–166 (LWIACGAAAGMAAAYRAPLAG), 168–188 (LFIAEVLFGTMMLASLGPVII), 222–242 (ALIISTGVLAGLCGPLLLTLM), 260–280 (LALGGLIVGLLSLFTPAVWGN), 291–311 (APPLLMIIAGIFLCKLCAVLA), 316–336 (GAPGGVFTPTLFIGLAIGMLY), 352–372 (LLLGLTGMATLLAATTHAPIM), and 380–400 (MTGEYQLLPGLLIACVIASVI).

This sequence belongs to the chloride channel (TC 2.A.49) family. ClcB subfamily.

The protein localises to the cell inner membrane. Its function is as follows. Probably acts as an electrical shunt for an outwardly-directed proton pump that is linked to amino acid decarboxylation, as part of the extreme acid resistance (XAR) response. The sequence is that of Voltage-gated ClC-type chloride channel ClcB from Escherichia coli O9:H4 (strain HS).